The primary structure comprises 447 residues: Innexin-5 (447 aa).

Helical transmembrane passes span 30-47 (TSTLLGFSAIMMAASQYV), 108-128 (QWIPIVLVLQAFLFYLPSIIW), 198-218 (ALYLLVKILYLANIVLQFWIL), and 283-303 (VYVFFWFWLLFVGLLTVCSLA). The interval 389–447 (KKDDDSALPASAPVDLQEDDDDDTPFPPPTKAVAETLTSDDEEEETDVDSPDTTATLPR) is disordered. The span at 426–438 (TSDDEEEETDVDS) shows a compositional bias: acidic residues.

This sequence belongs to the pannexin family.

Its subcellular location is the cell membrane. The protein localises to the cell junction. It is found in the gap junction. Structural component of the gap junctions. The polypeptide is Innexin-5 (inx-5) (Caenorhabditis elegans).